A 111-amino-acid polypeptide reads, in one-letter code: uncharacterized protein (111 aa).

The protein localises to the mitochondrion. This is an uncharacterized protein from Arabidopsis thaliana (Mouse-ear cress).